The sequence spans 23 residues: Ocellatin-LB2 (23 aa).

Asn-23 is subject to Asparagine amide.

Expressed by the skin glands.

It is found in the secreted. Antibacterial peptide that inhibits the Gram-negative bacterium A.actinomycetemcomitans ATCC 29522 (MIC=210 uM). No activity against the bacteria E.coli ATCC 25922 and S.aureus ATCC 25923, or the fungi C.albicans ATCC 18804 and C.lusitaniae ATCC 56936. Does not show hemolytic activity towards rabbit erythrocytes. The sequence is that of Ocellatin-LB2 from Leptodactylus labyrinthicus (Labyrinth frog).